The chain runs to 317 residues: Insulin-like growth factor-binding protein 2 (317 aa).

The first 33 residues, 1-33, serve as a signal peptide directing secretion; sequence MQPRLGGPALLLLPPLLLLLLLGAGGGDCGARA. In terms of domain architecture, IGFBP N-terminal spans 35–126; sequence VLFRCPPCTP…VHGEGTCEKH (92 aa). 6 disulfide bridges follow: C39–C76, C42–C78, C50–C79, C68–C82, C90–C103, and C97–C123. 2 disordered regions span residues 126–146 and 190–218; these read HGDAEYSASPEQVADNGEEHS and QHRQMGKGGKHHLGLEEPKKLRPPPARTP. The Thyroglobulin type-1 domain maps to 216 to 298; it reads RTPCQQELDQ…APTIRGDPEC (83 aa). Intrachain disulfides connect C219/C253, C264/C275, and C277/C298. The Cell attachment site signature appears at 293–295; the sequence is RGD.

As to quaternary structure, interacts with IGF1. Interacts with IGF2. Interacts (via RGD motif) with integrin alpha5/ITGA5; this interaction induces cell migration, adhesion or apoptosis according to the context. Interacts with PTPRB; this interaction leads to PTPRB dimerization and inactivation. Cleaved by MMP9 leading to release of free IGF2 from IGFBP2-IGF2 complex, which contributes to enhance the motility and the growth of astrocytes. In terms of processing, O-glycosylated.

Its subcellular location is the secreted. In terms of biological role, multifunctional protein that plays a critical role in regulating the availability of IGFs such as IGF1 and IGF2 to their receptors and thereby regulates IGF-mediated cellular processes including proliferation, differentiation, and apoptosis in a cell-type specific manner. Functions coordinately with receptor protein tyrosine phosphatase beta/PTPRB and the IGF1 receptor to regulate IGF1-mediated signaling by stimulating the phosphorylation of PTEN leading to its inactivation and AKT1 activation. Plays a positive role in cell migration via interaction with integrin alpha5/ITGA5 through an RGD motif. Additionally, interaction with ITGA5/ITGB1 enhances the adhesion of endothelial progenitor cells to endothelial cells. Upon mitochondrial damage, facilitates apoptosis with ITGA5 of podocytes, and then activates the phosphorylation of focal adhesion kinase (FAK)-mediated mitochondrial injury. This is Insulin-like growth factor-binding protein 2 (IGFBP2) from Bos taurus (Bovine).